Reading from the N-terminus, the 335-residue chain is NADH-quinone oxidoreductase subunit H (335 aa).

A run of 8 helical transmembrane segments spans residues 12-32, 81-101, 114-134, 154-174, 187-207, 238-258, 270-290, and 307-327; these read IIAV…GALL, VIFT…FAVI, IGLL…LFAG, VSYE…VGSF, LWFI…GVAV, FFVG…TLFF, SLAF…FILL, and WKFC…IVLL.

The protein belongs to the complex I subunit 1 family. In terms of assembly, NDH-1 is composed of 13 different subunits. Subunits NuoA, H, J, K, L, M, N constitute the membrane sector of the complex.

It is found in the cell inner membrane. It carries out the reaction a quinone + NADH + 5 H(+)(in) = a quinol + NAD(+) + 4 H(+)(out). Its function is as follows. NDH-1 shuttles electrons from NADH, via FMN and iron-sulfur (Fe-S) centers, to quinones in the respiratory chain. The immediate electron acceptor for the enzyme in this species is believed to be ubiquinone. Couples the redox reaction to proton translocation (for every two electrons transferred, four hydrogen ions are translocated across the cytoplasmic membrane), and thus conserves the redox energy in a proton gradient. This subunit may bind ubiquinone. The sequence is that of NADH-quinone oxidoreductase subunit H from Pseudomonas syringae pv. tomato (strain ATCC BAA-871 / DC3000).